A 20-amino-acid polypeptide reads, in one-letter code: SVAVAGAIIKGAALTFNVLQ.

Positions 3–12 (AVAGAIIKGA) are plays an important role in the hemolytic activity. Residues 11 to 20 (GAALTFNVLQ) form an N-terminal region region.

The protein belongs to the actinoporin family. Sea anemone subfamily. In terms of assembly, octamer or nonamer in membranes. Monomer in the soluble state.

The protein localises to the secreted. The protein resides in the nematocyst. It is found in the target cell membrane. Pore-forming protein that forms cations-selective hydrophilic pores of around 1 nm and causes cardiac stimulation and cytolysis. Pore formation is a multi-step process that involves specific recognition of membrane sphingomyelin (but neither cholesterol nor phosphatidylcholine) using aromatic rich region and adjacent phosphocholine (POC) binding site, firm binding to the membrane (mainly driven by hydrophobic interactions) accompanied by the transfer of the N-terminal region to the lipid-water interface and finally pore formation after oligomerization of monomers. Cytolytic effects include red blood cells hemolysis, platelet aggregation and lysis, cytotoxic and cytostatic effects on fibroblasts. Lethality in mammals has been ascribed to severe vasospasm of coronary vessels, cardiac arrhythmia, and inotropic effects. This Actinia equina (Beadlet anemone) protein is Equinatoxin-3.